The following is a 384-amino-acid chain: MTDALTITRDLIRCPSVTPADAGALGVLEALLKQAGFTTHRVTFSEPGTADIDNLYARIGTEGPHITFAGHTDVVPPGDEASWSLPAFSGEVKDGYIYGRGAVDMKGGIACSVAAALDYLRDHGSQPKGSISFLITGDEEDVSINGTIKLLQWAADRGETFDHCVLGEPSNQEVMGDCIKIGRRGSQSGTLIVEGKQGHVAYPHRASNPVPDISRLIVALSDEPLDNGSAQFQPSNLEFTTVDVGNTATNVIAGIARAKFNIRYNDCHTQESLRALVEQRLAKACGNRIRAHIDWLPSNSDVFLTKPGPFTDLAVAAIEEVTGRKPELSTTGGTSDARFISSYCPVIEFGLVGQTMHQIDERASVADIATLTKIYRGILDRYFA.

His71 serves as a coordination point for Zn(2+). Asp73 is an active-site residue. Asp104 contacts Zn(2+). Glu139 serves as the catalytic Proton acceptor. Residues Glu140, Glu168, and His357 each contribute to the Zn(2+) site.

Belongs to the peptidase M20A family. DapE subfamily. In terms of assembly, homodimer. It depends on Zn(2+) as a cofactor. The cofactor is Co(2+).

It catalyses the reaction N-succinyl-(2S,6S)-2,6-diaminopimelate + H2O = (2S,6S)-2,6-diaminopimelate + succinate. It functions in the pathway amino-acid biosynthesis; L-lysine biosynthesis via DAP pathway; LL-2,6-diaminopimelate from (S)-tetrahydrodipicolinate (succinylase route): step 3/3. Its function is as follows. Catalyzes the hydrolysis of N-succinyl-L,L-diaminopimelic acid (SDAP), forming succinate and LL-2,6-diaminopimelate (DAP), an intermediate involved in the bacterial biosynthesis of lysine and meso-diaminopimelic acid, an essential component of bacterial cell walls. The polypeptide is Succinyl-diaminopimelate desuccinylase (Bradyrhizobium sp. (strain ORS 278)).